Here is a 496-residue protein sequence, read N- to C-terminus: MLSLIVEATLLLVVLVLSAHYVRRRMKSLPPGPIGIPILGNMLDMPTHDEAQTIAGWSKKYGDMIFVTIAGTPFLYLNGAKETMDLLDKRSALYSECDMGGLVPLTGYGDRFKLERRLMNQALSARAVEKWEPLVAEETNMMLKRILDAPERFIPHLRRMAGSLIFTSIYGYRVTSDDDPYVKAAEEFMSVSSHAILNGWLVDFLPFLRHVPGLTIHKKAAEWKIKMEEWVEKPHAMFKATLADNPDDNSFCRTLLFPEDGHPIDAETEERIKWVATSMYGAGSDTTVASLSQFILAMILHPEVQKKAQNEVDAVVGRDRLPTLDDRARLPYVECVLKECLRWGTPVPLTIPHRLSQVDEYNGHILPEGTLCVANIWAMLHDERIYPEPHRFYPERYEGKMDAEQTRLLDPSTYIFGFGRRRCPGIHFANPSVWLGMVSLLSTFTFTPSLDKKGREIIPPAKFISGTFRHPEPFKCRITPRHEGVPALIEQVQPAF.

Residues 2–22 (LSLIVEATLLLVVLVLSAHYV) form a helical membrane-spanning segment. Cys-423 is a heme binding site.

This sequence belongs to the cytochrome P450 family. The cofactor is heme.

The protein localises to the membrane. The enzyme catalyses wigandol + 4 reduced [NADPH--hemoprotein reductase] + 4 O2 = arnebinol A + 4 oxidized [NADPH--hemoprotein reductase] + 6 H2O + 4 H(+). The catalysed reaction is arnebinol A + reduced [NADPH--hemoprotein reductase] + O2 = clavilactone A + oxidized [NADPH--hemoprotein reductase] + H2O + H(+). It carries out the reaction (2E)-geranylhydroquinone + reduced [NADPH--hemoprotein reductase] + O2 = isoalliodorol + oxidized [NADPH--hemoprotein reductase] + H2O + H(+). It functions in the pathway secondary metabolite biosynthesis; terpenoid biosynthesis. Its function is as follows. Cytochrome P450 monooxygenase; part of the gene cluster that mediates the biosynthesis of clavilactone A, a meroterpenoid that features a unique benzo-fused ten-membered carbocyclic ring unit with an alpha,beta-epoxy-gamma-lactone moiety, forming an intriguing 10/5/3 tricyclic nested skeleton. ClaR, ClaS and ClaT are sufficient to produce clavilactone A. Within the pathway, claT acts as a multifunctional cytochrome P450 monooxygenase that catalyzes a ten-electron oxidation to accomplish the biosynthesis of the 10/5/3 tricyclic nested skeleton in clavilactones. The biosynthesis begins with the prenyltransferase claS that transfers geranyl pyrophosphate (GPP) to hydroquinone to produces geranylhydroquinone. The cytochrome P450 monooxygenase claR then catalyzes the diradical coupling reaction between the intramolecular hydroquinone and allyl moieties to form the benzo-fused ten-membered carbocyclic ring unit of wigantol. Finally the cytochrome P450 monooxygenase claT exquisitely and stereoselectively assembles the alpha,beta-epoxy-gamma-lactone moiety, producing clavilactone A via arnebinol A. This Ampulloclitocybe clavipes (Club foot) protein is Cytochrome P450 monooxygenase claT.